Consider the following 125-residue polypeptide: Large ribosomal subunit protein bL20 (125 aa).

Belongs to the bacterial ribosomal protein bL20 family.

Functionally, binds directly to 23S ribosomal RNA and is necessary for the in vitro assembly process of the 50S ribosomal subunit. It is not involved in the protein synthesizing functions of that subunit. In Rhodospirillum rubrum (strain ATCC 11170 / ATH 1.1.1 / DSM 467 / LMG 4362 / NCIMB 8255 / S1), this protein is Large ribosomal subunit protein bL20.